Here is a 356-residue protein sequence, read N- to C-terminus: MIRISVDVMGGDYGPEVTIAGAAIAQKHLPKVHFLFYGIDEAVEPVLKKYPDLLSVSHFYATESYTRMDEKPSQALRVGRGKSSMWHAIEAVKNGEADSCVSAGNTGALMAMSYFCLKMIAETERPGIAGIWPTLRNDSIVLDIGATIGASANQLVDFAVMGASMFRSLYNVEKTTIGLLNVGVEEVKGLDEIKKAGIILSKVQFEGLEYKGFIEGNDIGKGMVDVVVTEGFSGNIALKVAEGTAQQISELLKSAMRSSIFSRFGYLLSQSAFRKLKQKIDLDRVNGGVLLGLNGIVVKSHGSASASDFSSAIRIGYEMVNNELLKKIITDLQCFHEKKAIFLNNKGESVIDKETI.

It belongs to the PlsX family. In terms of assembly, homodimer. Probably interacts with PlsY.

It localises to the cytoplasm. It carries out the reaction a fatty acyl-[ACP] + phosphate = an acyl phosphate + holo-[ACP]. Its pathway is lipid metabolism; phospholipid metabolism. Functionally, catalyzes the reversible formation of acyl-phosphate (acyl-PO(4)) from acyl-[acyl-carrier-protein] (acyl-ACP). This enzyme utilizes acyl-ACP as fatty acyl donor, but not acyl-CoA. This is Phosphate acyltransferase from Bartonella bacilliformis (strain ATCC 35685 / KC583 / Herrer 020/F12,63).